The following is a 3674-amino-acid chain: Spectrin beta chain, non-erythrocytic 5 (3674 aa).

Residues 1–37 (MAGQPHSPRELLGAAGHRSRRPSTELRVPPSPSLTMD) form a disordered region. An actin-binding region spans residues 1–279 (MAGQPHSPRE…IMTYVSLYYH (279 aa)). Calponin-homology (CH) domains are found at residues 54-159 (QMQE…LRFQ) and 177-282 (LSTK…HYCS). Spectrin repeat units lie at residues 307–416 (LQTQ…ALQQ), 428–529 (ARRF…RKQV), 642–742 (AEFL…ARLQ), 747–810 (VLQY…QGRA), 900–996 (GFCS…AVQL), 1103–1206 (ARQS…WLQE), 1209–1311 (ELQK…RQLL), and 1315–1417 (QLQE…ELQQ). The tract at residues 1441–1469 (ALQSSETGQDLRSSQRLQKRHQQLESESR) is disordered. Positions 1442–1456 (LQSSETGQDLRSSQR) are enriched in polar residues. 19 Spectrin repeats span residues 1521–1624 (ELHQ…CLQQ), 1628–1727 (FQQY…RELE), 1731–1835 (RLHE…ALRD), 1842–1940 (VHRD…AQLE), 1944–2046 (LLAR…ERLQ), 2052–2146 (QLFL…HALH), 2150–2253 (LMAS…ELED), 2256–2361 (NFLE…QQLE), 2366–2467 (IHVL…EALD), 2471–2574 (QAQK…QLQQ), 2577–2680 (ELQL…RLEE), 2683–2784 (QLQA…AKLQ), 2791–2890 (RLRR…TALE), 2894–2997 (LLLK…LLQQ), 3000–3103 (EAQQ…GLQE), 3106–3209 (QLHQ…ENLA), 3213–3311 (EVHS…QWLA), 3318–3415 (AFLG…RWQR), and 3422–3488 (LQKL…EQEL). Residues 3533–3641 (TPTMEGSLEF…WWRALGSTAA (109 aa)) form the PH domain.

Belongs to the spectrin family. In terms of assembly, probably associates with an alpha chain. Interacts (via C-terminus) with TRPC4. As to expression, expressed at very low levels in many tissues, with strongest expression in cerebellum, spinal cord, stomach, pituitary gland, liver, pancreas, salivary gland, kidney, bladder, and heart.

Its subcellular location is the cytoplasm. The protein localises to the cytoskeleton. The protein is Spectrin beta chain, non-erythrocytic 5 (SPTBN5) of Homo sapiens (Human).